The primary structure comprises 231 residues: Killer cell lectin-like receptor subfamily F member 1 (231 aa).

Over 1 to 38 (MQDEERYMTLNVQSKKRSSAQTSQLTFKDYSVTLHWYK) the chain is Cytoplasmic. Tyr7 is modified (phosphotyrosine). A helical; Signal-anchor for type II membrane protein transmembrane segment spans residues 39-59 (ILLGISGTVNGILTLTLISLI). Residues 60 to 231 (LLVSQGVLLK…SSVFKWICQY (172 aa)) are Extracellular-facing. 4 N-linked (GlcNAc...) asparagine glycosylation sites follow: Asn77, Asn91, Asn96, and Asn176. One can recognise a C-type lectin domain in the interval 121–230 (YQGKCYWFSN…CSSVFKWICQ (110 aa)). Cystine bridges form between Cys142-Cys229 and Cys208-Cys221.

Homodimer. Interacts with CLEC2B. Phosphorylated on Tyr-7; this phosphorylation is required for NKp80/KLRF1-mediated cytotoxicity. As to expression, strongly expressed in peripheral blood leukocytes and spleen, with weaker expression in lymph node and adult liver, and no expression detected in bone marrow, thymus, and fetal liver. Not expressed in brain, heart, placenta, lung, kidney, skeletal muscle, and pancreas. Within peripheral blood leukocyte and immunocyte cell lines, expression was predominant in NK cells but was also detected in monocytes.

It is found in the membrane. Functionally, functions as an activating receptor involved in immunosurveillance upon binding to various ligands displayed at the surface of myeloid cells. Upon interaction with CLEC2B ligand, stimulates NK-cell cytotoxicity and cytokine production leading to the cytolysis of malignant CLEC2B-expressing myeloid cells. Actviation of the common cytotoxicity pathway involves SRC and SYK kinases. The sequence is that of Killer cell lectin-like receptor subfamily F member 1 (KLRF1) from Homo sapiens (Human).